The following is a 108-amino-acid chain: Replication restart protein PriB (108 aa).

The SSB domain maps to Val-8–Glu-108.

This sequence belongs to the PriB family. As to quaternary structure, homodimer. Interacts with PriA and DnaT. Component of the replication restart primosome. Primosome assembly occurs via a 'hand-off' mechanism. PriA binds to replication forks, subsequently PriB then DnaT bind; DnaT then displaces ssDNA to generate the helicase loading substrate.

Functionally, involved in the restart of stalled replication forks, which reloads the replicative helicase on sites other than the origin of replication; the PriA-PriB pathway is the major replication restart pathway. During primosome assembly it facilitates complex formation between PriA and DnaT on DNA; stabilizes PriA on DNA. Stimulates the DNA unwinding activity of PriA helicase. The polypeptide is Replication restart protein PriB (Histophilus somni (strain 129Pt) (Haemophilus somnus)).